The following is a 1368-amino-acid chain: MKKSDSSSSLVFSGIQIEINNNYGSGSGSNNNNNNNNNNNNINNNNNPNNNPNNNGPPLRPSSEWVLLSSSQPTIATTTNLTTNAPLSDSMIMNYVGNDNLNTPITPSTSSPYLKRNNSNLNSIIENSNNSSPSNAITRNNSFNMDPNNNNNNNNNNNNNNNNNNNNGEYMNSSIVFDNNVNNNNNNPNNNPNNNVHSNSHNTNNSITHSGSITSSNSNNNNSNNNNNNNSNNNNNINNSVNSVNSLMMNSDKNCNHQFPSDDVLISNEHDIIDLALNKEFLNQYRIQTNSIFINSQHVINQDVQSYQDYESLLSSYNTILNQLLLITSSNKNNNNNNNPNNNNNNVTSPNSLLSPPSTSQLQQQQQQQQQSPSPPLNNNNNNNNNNNNNNNNNNNNNNNNNNNNNNNNYYLMSTSTMSSTTTNLSTSTNSNINTNIPTNYNMSTSITATTTTTTATNTIAIGTTTTAAITTAATNSTNSNNLNLSSTNLGLDNNFLYQRILPEILSLLEKLTVFSRNNDTEIFNRLGNNVKLIFDHLNLIKNDILEANFSHLSGIFTIYNHTIISSDKTTKQFVFRFLHSLAPMTVPPAIVVTPELKKVVQKIHFSKPTFTPLCIEWKEICKYIDVLKSVSLFIAQVGQYCFLNQSIIINDELLFIPSIYVLFDNIQNLSMKEERFHIEYILHNLKFIVSKIPKQTREFTKTEIERLYSYIRGNPSYVKEILPKLLKNIYIDPYFYHLWNNHCIHLLNNNINNNNNNNTNNSSNNSNNNNNTNINIGKDIGNDLTLLLVSNKNSFLLSFDERHFSIFYSSISNSTTTTITPTITSPNNNSNRINNNNNNNNNNNNNNNNNNNINVNNNVNNNNVNNNNNNNNNNSNQYIVNYFDNTTSLLNFIESNQFKYIILSNKEVETIKFFKSVLPVTLPLPQPSSRQAILQQQQQQNYKPRILCGPCLSRFKTILDEFDNEESIENQIYSNYLNNINNNENIDPNLIDGNENKINGNDNNNNHDDDEKTNNNNNNNNNNNNNNNNNIYNNNNIEDYNNNNDNNYNFENEINDKENEFRELEKEINEIEKEEQELIKEYLELENRNQINLDIKQKLEDILKEIKLEEKTHYDLVNNYYQEYFDLKQEDEIYTNQINAIRDQLERVSQIDINKITFKIELPNTGVNGGIVGYNESSNTTISSINGFRLGTLSNLKVDWEEINSAWGETSLLLYVLASQLEFNFQNYKLIPMSSKSIIQSKNDKMSYTLYGGDNIQFSRSFLWFGASDQRFDSGMEAFLSCVNDIATFVQSKKPSINFNYRISKDKIGDSNRLLSIKIAGNSELNWTMALRFMLSNLKKILDNLDSIVESKQKQQQLQRQQSLNNL.

2 stretches are compositionally biased toward low complexity: residues 24 to 57 (GSGSGSNNNNNNNNNNNNINNNNNPNNNPNNNGP) and 122 to 135 (NSIIENSNNSSPSN). 5 disordered regions span residues 24–64 (GSGS…PSSE), 122–249 (NSII…SLMM), 331–431 (NKNN…STNS), 819–874 (TITP…NNNN), and 992–1048 (IDGN…NDNN). Positions 136 to 147 (AITRNNSFNMDP) are enriched in polar residues. Over residues 148-167 (NNNNNNNNNNNNNNNNNNNN) the composition is skewed to low complexity. Residues 168-177 (GEYMNSSIVF) show a composition bias toward polar residues. A compositionally biased stretch (low complexity) spans 179 to 246 (NNVNNNNNNP…INNSVNSVNS (68 aa)). Low complexity-rich tracts occupy residues 992–1005 (IDGNENKINGNDNN) and 1015–1048 (NNNNNNNNNNNNNNNNNIYNNNNIEDYNNNNDNN). Residues 1047–1150 (NNYNFENEIN…AIRDQLERVS (104 aa)) adopt a coiled-coil conformation.

It belongs to the beclin family.

The protein resides in the endosome membrane. Functionally, involved in autophagy. May be required to recruit the atg8-phosphatidylinositol conjugate and the atg12-atg5 conjugate to the pre-autophagosomal structure. Required for normal survival when exposed to pathogenic bacteria S.typhimurium by promoting autophagic degradation of intracellular S.typhimurium. This chain is Beclin-1-like protein A (atg6A), found in Dictyostelium discoideum (Social amoeba).